We begin with the raw amino-acid sequence, 237 residues long: Pyridoxine 5'-phosphate synthase (237 aa).

2 residues coordinate 3-amino-2-oxopropyl phosphate: Asn7 and Arg18. His43 acts as the Proton acceptor in catalysis. The 1-deoxy-D-xylulose 5-phosphate site is built by Arg45 and His50. Glu70 (proton acceptor) is an active-site residue. Thr100 contributes to the 1-deoxy-D-xylulose 5-phosphate binding site. His190 serves as the catalytic Proton donor. 3-amino-2-oxopropyl phosphate-binding positions include Asp191 and 213-214 (GH).

Belongs to the PNP synthase family. In terms of assembly, homooctamer; tetramer of dimers.

It localises to the cytoplasm. It carries out the reaction 3-amino-2-oxopropyl phosphate + 1-deoxy-D-xylulose 5-phosphate = pyridoxine 5'-phosphate + phosphate + 2 H2O + H(+). Its pathway is cofactor biosynthesis; pyridoxine 5'-phosphate biosynthesis; pyridoxine 5'-phosphate from D-erythrose 4-phosphate: step 5/5. In terms of biological role, catalyzes the complicated ring closure reaction between the two acyclic compounds 1-deoxy-D-xylulose-5-phosphate (DXP) and 3-amino-2-oxopropyl phosphate (1-amino-acetone-3-phosphate or AAP) to form pyridoxine 5'-phosphate (PNP) and inorganic phosphate. The chain is Pyridoxine 5'-phosphate synthase from Christiangramia forsetii (strain DSM 17595 / CGMCC 1.15422 / KT0803) (Gramella forsetii).